The chain runs to 159 residues: Small ribosomal subunit protein uS13 (159 aa).

Residues 136 to 159 (QRTRSTGRSGATVGVTRKKTQAKK) form a disordered region. Positions 138–149 (TRSTGRSGATVG) are enriched in low complexity.

The protein belongs to the universal ribosomal protein uS13 family. In terms of assembly, part of the 30S ribosomal subunit. Forms a loose heterodimer with protein S19. Forms two bridges to the 50S subunit in the 70S ribosome.

In terms of biological role, located at the top of the head of the 30S subunit, it contacts several helices of the 16S rRNA. In the 70S ribosome it contacts the 23S rRNA (bridge B1a) and protein L5 of the 50S subunit (bridge B1b), connecting the 2 subunits; these bridges are implicated in subunit movement. The chain is Small ribosomal subunit protein uS13 from Methanothrix thermoacetophila (strain DSM 6194 / JCM 14653 / NBRC 101360 / PT) (Methanosaeta thermophila).